The primary structure comprises 767 residues: Cilia- and flagella-associated protein 91 (767 aa).

The tract at residues 1–29 (MSHAVTIEEPQAQPQVSQTRYRERSRAGS) is disordered.

It belongs to the CFAP91 family. In terms of assembly, interacts with MYCBP and AKAP1. Part of a complex containing MYCBP, AKAP1 and PRKAR2B. Interacts with CFAP61. Does not interact with MYCBP. In terms of processing, phosphorylated by PKA. In terms of tissue distribution, strongly expressed in the liver. Widely expressed, but strongly expressed in all spermatogenesis-related tissues, including the testis, the epithelium of cauda and the corpus epididymis, as well as the spermatid and mature sperm. Also expressed in Leydig cells.

It localises to the mitochondrion. It is found in the cytoplasm. The protein localises to the cytoskeleton. Its subcellular location is the cilium axoneme. Functionally, involved in sperm flagellum axonemal organization and function. May regulate cilium motility through its role in the assembly of the axonemal radial spokes. The protein is Cilia- and flagella-associated protein 91 of Homo sapiens (Human).